We begin with the raw amino-acid sequence, 456 residues long: GPI-anchored protein 13 (456 aa).

Positions 1 to 23 are cleaved as a signal peptide; sequence MRSPSLAVAATTVLGLFSSSALA. N-linked (GlcNAc...) asparagine glycosylation occurs at N27. G433 carries the GPI-anchor amidated glycine lipid modification. The propeptide at 434–456 is removed in mature form; that stretch reads AAAVNVVPTTAFGLFAIILASIF.

Post-translationally, the GPI-anchor is attached to the protein in the endoplasmic reticulum and serves to target the protein to the cell surface. There, the glucosamine-inositol phospholipid moiety is cleaved off and the GPI-modified mannoprotein is covalently attached via its lipidless GPI glycan remnant to the 1,6-beta-glucan of the outer cell wall layer.

Its subcellular location is the secreted. It localises to the cell wall. It is found in the membrane. Cell wall protein which contributes to cell wall synthesis and is important for acquiring normal surface properties. Required for virulence in a mouse infection model. This Candida albicans (strain SC5314 / ATCC MYA-2876) (Yeast) protein is GPI-anchored protein 13 (PGA13).